The sequence spans 501 residues: Aluminum-activated malate transporter 2 (501 aa).

Helical transmembrane passes span 22 to 42 (VVHA…YYYQ), 52 to 72 (AMWA…ATLG), 78 to 98 (AVAT…ASLS), 101 to 121 (TVEP…STFV), 130 to 150 (RYDY…VSGF), and 166 to 186 (VIMG…VWAG). A disordered region spans residues 398–425 (FKNKKKPSKSNSGSIGQAMPNKSHDDDD).

This sequence belongs to the aromatic acid exporter (TC 2.A.85) family.

It localises to the membrane. In terms of biological role, malate transporter. This is Aluminum-activated malate transporter 2 (ALMT2) from Arabidopsis thaliana (Mouse-ear cress).